Here is a 397-residue protein sequence, read N- to C-terminus: MNAGSDPVVIISAARTAIGSFNGALSTVPVHNLGTTVIKEVLQRAKVAPEEVSEVIFGHVLTAGCGQNPTRQASVGAGIPYSVPAWSCQMICGSGLKAVCLAAQSIAMGDSTIVVAGGMENMSKAPHLAHLRSGVKMGEVPLADSILCDGLTDAFHNYHMGITAENVAKKWQVSREAQDKVAVVSQNRAEHAQKAGHFDKEIVPVHVSSRKGLTEVKIDEFPRHGSNLEAMSKLKPYFLTDGTGTVTPANASGMNDGAAAVVLMKKTEAESRMLKPLAQVVSWSQAGVEPSVMGVGPIPAIKQAVAKAGWSLEDVDVFEINEAFAAVSAAIAKELGLSPEKVNIDGGAIALGHPLGASGCRILVTLLHTLERVGGTRGVAALCIGGGMGIAMCVQRG.

An N-acetylmethionine modification is found at M1. C92 acts as the Acyl-thioester intermediate in catalysis. K200 carries the N6-acetyllysine modification. R223 and S226 together coordinate CoA. 2 positions are modified to N6-acetyllysine: K233 and K235. S252 serves as a coordination point for CoA. C383 (proton donor/acceptor) is an active-site residue.

The protein belongs to the thiolase-like superfamily. Thiolase family. In terms of assembly, homotetramer.

Its subcellular location is the cytoplasm. It localises to the cytosol. The catalysed reaction is 2 acetyl-CoA = acetoacetyl-CoA + CoA. It participates in lipid metabolism; fatty acid metabolism. Its function is as follows. Involved in the biosynthetic pathway of cholesterol. The chain is Acetyl-CoA acetyltransferase, cytosolic (Acat2) from Rattus norvegicus (Rat).